Reading from the N-terminus, the 631-residue chain is tRNA uridine 5-carboxymethylaminomethyl modification enzyme MnmG (631 aa).

13 to 18 contributes to the FAD binding site; sequence GGGHAG. Residue 273-287 participates in NAD(+) binding; that stretch reads GPRYCPSIEDKVNRF.

This sequence belongs to the MnmG family. Homodimer. Heterotetramer of two MnmE and two MnmG subunits. FAD serves as cofactor.

Its subcellular location is the cytoplasm. NAD-binding protein involved in the addition of a carboxymethylaminomethyl (cmnm) group at the wobble position (U34) of certain tRNAs, forming tRNA-cmnm(5)s(2)U34. This chain is tRNA uridine 5-carboxymethylaminomethyl modification enzyme MnmG, found in Chromohalobacter salexigens (strain ATCC BAA-138 / DSM 3043 / CIP 106854 / NCIMB 13768 / 1H11).